We begin with the raw amino-acid sequence, 250 residues long: tRNA (guanine-N(1)-)-methyltransferase (250 aa).

S-adenosyl-L-methionine contacts are provided by residues Gly116 and 136–141; that span reads IGDYVL.

It belongs to the RNA methyltransferase TrmD family. As to quaternary structure, homodimer.

Its subcellular location is the cytoplasm. The catalysed reaction is guanosine(37) in tRNA + S-adenosyl-L-methionine = N(1)-methylguanosine(37) in tRNA + S-adenosyl-L-homocysteine + H(+). Its function is as follows. Specifically methylates guanosine-37 in various tRNAs. This Pseudomonas putida (strain ATCC 700007 / DSM 6899 / JCM 31910 / BCRC 17059 / LMG 24140 / F1) protein is tRNA (guanine-N(1)-)-methyltransferase.